The chain runs to 969 residues: Proprotein convertase subtilisin/kexin type 6 (969 aa).

The span at Met1 to Arg16 shows a compositional bias: pro residues. The tract at residues Met1–Pro39 is disordered. The first 63 residues, Met1–Ala63, serve as a signal peptide directing secretion. A compositionally biased stretch (gly residues) spans Gly26–Pro39. Positions Pro64 to Arg149 are excised as a propeptide. The 320-residue stretch at Met168 to Val487 folds into the Peptidase S8 domain. Residues Asp205 and His246 each act as charge relay system in the active site. Residue Asn259 is glycosylated (N-linked (GlcNAc...) asparagine). Ser420 (charge relay system) is an active-site residue. The P/Homo B domain maps to Ala495–His635. The Cell attachment site motif lies at Arg553 to Asp555. The tract at residues Glu658 to Thr683 is disordered. FU repeat units lie at residues Thr692–Gly739, Ala743–Ala790, Gln794–Phe838, Leu842–Pro887, and His895–Cys943. The interval Cys695–Ile930 is CRM (Cys-rich motif). 2 N-linked (GlcNAc...) asparagine glycosylation sites follow: Asn914 and Asn932. The PLAC domain occupies Thr931 to Gly969.

It belongs to the peptidase S8 family. The PACE4A-I precursor protein seems to exist in the reticulum endoplasmic as both a monomer and a dimer-sized complex whereas mature PACE4A-I exists only as a monomer, suggesting that propeptide cleavage affects its tertiary or quaternary structure. Interacts (immature form including the propeptide) with RCN3; probably involved in the maturation and the secretion of PCSK6. It depends on Ca(2+) as a cofactor. Each PACE4 isoform exhibits a unique restricted distribution. Isoform PACE4A-I is expressed in heart, brain, placenta, lung, skeletal muscle, kidney, pancreas, but at comparatively higher levels in the liver. Isoform PACE4A-II is at least expressed in placenta. Isoform PACE4B was only found in the embryonic kidney cell line from which it was isolated. Isoform PACE4C and isoform PACE4D are expressed in placenta. Isoform PACE4E-I is expressed in cerebellum, placenta and pituitary. Isoform PACE4E-II is at least present in cerebellum.

Its subcellular location is the secreted. It localises to the endoplasmic reticulum. The protein localises to the endomembrane system. In terms of biological role, serine endoprotease that processes various proproteins by cleavage at paired basic amino acids, recognizing the RXXX[KR]R consensus motif. Likely functions in the constitutive secretory pathway, with unique restricted distribution in both neuroendocrine and non-neuroendocrine tissues. The protein is Proprotein convertase subtilisin/kexin type 6 (PCSK6) of Homo sapiens (Human).